We begin with the raw amino-acid sequence, 399 residues long: MTLLNPYFGKFGGMYVPQILMPALYQLEKNFVDAKKDSNFQKSFFNYLKNYAGRPTPLTLCNNLTNGTKTRIYLKREDLLHGGAHKTNQVLGQAMLAVKMKKKEIIAETGAGQHGVAAAIASALFNLKCKIYMGYKDIKRQSPNVFRMKLMGAEVVSVESGSGTLKDACNEALRDWSRNYQKSHYMIGTAAGPHPYPTIVKEFQKMIGEEAKKQILEQENRLPDAIIACVGGGSNAIGIFSDFIDEDVNLIGVEPAGQGIETGKHGAPLNHGRTGIYFGMKSHLMQSQEGQIEKSWSISAGLDFPSVGPEHSWLNSIHRAKYVSITDIEALEAFQILSKKEGIIPALESSHALAYALKLMYLDPKKEQVFIVNLSGRGDKDIFTVREILKKTEKKHESL.

Lys-86 carries the N6-(pyridoxal phosphate)lysine modification.

It belongs to the TrpB family. As to quaternary structure, tetramer of two alpha and two beta chains. The cofactor is pyridoxal 5'-phosphate.

The catalysed reaction is (1S,2R)-1-C-(indol-3-yl)glycerol 3-phosphate + L-serine = D-glyceraldehyde 3-phosphate + L-tryptophan + H2O. It participates in amino-acid biosynthesis; L-tryptophan biosynthesis; L-tryptophan from chorismate: step 5/5. Its function is as follows. The beta subunit is responsible for the synthesis of L-tryptophan from indole and L-serine. The chain is Tryptophan synthase beta chain (trpB) from Buchnera aphidicola subsp. Schizaphis graminum (strain Sg).